Consider the following 103-residue polypeptide: Large ribosomal subunit protein bL21 (103 aa).

It belongs to the bacterial ribosomal protein bL21 family. Part of the 50S ribosomal subunit. Contacts protein L20.

In terms of biological role, this protein binds to 23S rRNA in the presence of protein L20. This chain is Large ribosomal subunit protein bL21, found in Acidithiobacillus ferrooxidans (strain ATCC 23270 / DSM 14882 / CIP 104768 / NCIMB 8455) (Ferrobacillus ferrooxidans (strain ATCC 23270)).